The sequence spans 581 residues: FAD-linked oxidoreductase easE (581 aa).

Positions 1-25 (MYRLLGPLACLALAWFFTWAPSGRC) are cleaved as a signal peptide. Residues N44 and N73 are each glycosylated (N-linked (GlcNAc...) asparagine). Residues 122 to 306 (HQGRIPLYSA…AQATIRVFPD (185 aa)) enclose the FAD-binding PCMH-type domain. N369 carries an N-linked (GlcNAc...) asparagine glycan.

Belongs to the oxygen-dependent FAD-linked oxidoreductase family. FAD serves as cofactor.

Its pathway is alkaloid biosynthesis; ergot alkaloid biosynthesis. FAD-linked oxidoreductase; part of the gene cluster that mediates the biosynthesis of fungal ergot alkaloid. DmaW catalyzes the first step of ergot alkaloid biosynthesis by condensing dimethylallyl diphosphate (DMAP) and tryptophan to form 4-dimethylallyl-L-tryptophan. The second step is catalyzed by the methyltransferase easF that methylates 4-dimethylallyl-L-tryptophan in the presence of S-adenosyl-L-methionine, resulting in the formation of 4-dimethylallyl-L-abrine. The catalase easC and the FAD-dependent oxidoreductase easE then transform 4-dimethylallyl-L-abrine to chanoclavine-I which is further oxidized by easD in the presence of NAD(+), resulting in the formation of chanoclavine-I aldehyde. Agroclavine dehydrogenase easG then mediates the conversion of chanoclavine-I aldehyde to agroclavine via a non-enzymatic adduct reaction: the substrate is an iminium intermediate that is formed spontaneously from chanoclavine-I aldehyde in the presence of glutathione. Further conversion of agroclavine to paspalic acid is a two-step process involving oxidation of agroclavine to elymoclavine and of elymoclavine to paspalic acid, the second step being performed by the elymoclavine oxidase cloA. However, cloA does not encode a functional enzyme indicating that C.fusiformis terminates its ergot alkaloid pathway at elymoclavine. This Claviceps fusiformis (Ergot fungus) protein is FAD-linked oxidoreductase easE.